Consider the following 214-residue polypeptide: Leucyl/phenylalanyl-tRNA--protein transferase (214 aa).

The protein belongs to the L/F-transferase family.

The protein localises to the cytoplasm. The enzyme catalyses N-terminal L-lysyl-[protein] + L-leucyl-tRNA(Leu) = N-terminal L-leucyl-L-lysyl-[protein] + tRNA(Leu) + H(+). The catalysed reaction is N-terminal L-arginyl-[protein] + L-leucyl-tRNA(Leu) = N-terminal L-leucyl-L-arginyl-[protein] + tRNA(Leu) + H(+). It catalyses the reaction L-phenylalanyl-tRNA(Phe) + an N-terminal L-alpha-aminoacyl-[protein] = an N-terminal L-phenylalanyl-L-alpha-aminoacyl-[protein] + tRNA(Phe). Its function is as follows. Functions in the N-end rule pathway of protein degradation where it conjugates Leu, Phe and, less efficiently, Met from aminoacyl-tRNAs to the N-termini of proteins containing an N-terminal arginine or lysine. In Cereibacter sphaeroides (strain ATCC 17023 / DSM 158 / JCM 6121 / CCUG 31486 / LMG 2827 / NBRC 12203 / NCIMB 8253 / ATH 2.4.1.) (Rhodobacter sphaeroides), this protein is Leucyl/phenylalanyl-tRNA--protein transferase.